A 20-amino-acid polypeptide reads, in one-letter code: Unknown protein NF019 from 2D-PAGE (20 aa).

The protein is Unknown protein NF019 from 2D-PAGE of Naegleria fowleri (Brain eating amoeba).